The following is a 49-amino-acid chain: Large ribosomal subunit protein eL40 (49 aa).

The protein belongs to the eukaryotic ribosomal protein eL40 family.

This Archaeoglobus fulgidus (strain ATCC 49558 / DSM 4304 / JCM 9628 / NBRC 100126 / VC-16) protein is Large ribosomal subunit protein eL40.